We begin with the raw amino-acid sequence, 411 residues long: Secretion apparatus protein BsaZ (411 aa).

The next 4 helical transmembrane spans lie at 28 to 48, 80 to 100, 137 to 157, and 175 to 195; these read IVALIVIATGALAAPALVDLT, IAAPFVLLCAAAGALPSLVQS, ALLYVGVFALTVRVFADLYHA, and IVLTVRLVLLFLLCALPVLIL. A disordered region spans residues 341 to 411; that stretch reads AANRGGPPPE…APARTGDQNA (71 aa). Over residues 370–404 the composition is skewed to low complexity; sequence DACADNAFPDDAPPGAAAPNAGSPDSPAPDGGAPA.

Belongs to the type III secretion exporter family.

The protein localises to the cell membrane. Functionally, part of the bsa type III secretion system, is involved in the intracellular replication of invading bacteria inside the host cell. Probably necessary for the lysis of the vacuole membrane and escape into the host cell cytoplasm. This chain is Secretion apparatus protein BsaZ (bsaZ), found in Burkholderia pseudomallei (strain 1106a).